A 233-amino-acid chain; its full sequence is Adenosylcobinamide-GDP ribazoletransferase (233 aa).

A run of 7 helical transmembrane segments spans residues 24–44, 46–66, 96–116, 117–137, 156–176, 184–204, and 209–229; these read LWAF…VLYL, LPLS…LLHL, IAGL…LQLV, PFYA…LALA, SGQL…VVVY, LLGL…FGGI, and IGAI…FAGA.

It belongs to the CobS family. Requires Mg(2+) as cofactor.

The protein localises to the cell membrane. It carries out the reaction alpha-ribazole + adenosylcob(III)inamide-GDP = adenosylcob(III)alamin + GMP + H(+). The enzyme catalyses alpha-ribazole 5'-phosphate + adenosylcob(III)inamide-GDP = adenosylcob(III)alamin 5'-phosphate + GMP + H(+). Its pathway is cofactor biosynthesis; adenosylcobalamin biosynthesis; adenosylcobalamin from cob(II)yrinate a,c-diamide: step 7/7. In terms of biological role, joins adenosylcobinamide-GDP and alpha-ribazole to generate adenosylcobalamin (Ado-cobalamin). Also synthesizes adenosylcobalamin 5'-phosphate from adenosylcobinamide-GDP and alpha-ribazole 5'-phosphate. The protein is Adenosylcobinamide-GDP ribazoletransferase of Thermococcus onnurineus (strain NA1).